A 283-amino-acid chain; its full sequence is MRDNLFIYLQYLLPHALTSRLVSKLADSENKIIKNHLIKLAIKKFNINLVEAKETDISKYKSFNDFFIRELKDDLRPISNDKNVISSPADGVLSQFGTITDNSLIQAKGKLFSLESLIASSSTTNFTKFATIYLSPKDYHRVHMPIDGKLTKMVYIPGKLFSVNKITTSKVDNLFAKNERLICYFDTIIGEIAVIFVGALLVAGIETVWHGKIAPNYYKDIQTWDYNSAKFNIKFNKGDILGWFNFGSTVIILTSGNNVSFKFEENQNNIKIQVNQDLALITE.

Residues D90, H143, and S248 each act as charge relay system; for autoendoproteolytic cleavage activity in the active site. Catalysis depends on S248, which acts as the Schiff-base intermediate with substrate; via pyruvic acid; for decarboxylase activity. S248 bears the Pyruvic acid (Ser); by autocatalysis mark.

The protein belongs to the phosphatidylserine decarboxylase family. PSD-B subfamily. Prokaryotic type I sub-subfamily. In terms of assembly, heterodimer of a large membrane-associated beta subunit and a small pyruvoyl-containing alpha subunit. Pyruvate serves as cofactor. Is synthesized initially as an inactive proenzyme. Formation of the active enzyme involves a self-maturation process in which the active site pyruvoyl group is generated from an internal serine residue via an autocatalytic post-translational modification. Two non-identical subunits are generated from the proenzyme in this reaction, and the pyruvate is formed at the N-terminus of the alpha chain, which is derived from the carboxyl end of the proenzyme. The autoendoproteolytic cleavage occurs by a canonical serine protease mechanism, in which the side chain hydroxyl group of the serine supplies its oxygen atom to form the C-terminus of the beta chain, while the remainder of the serine residue undergoes an oxidative deamination to produce ammonia and the pyruvoyl prosthetic group on the alpha chain. During this reaction, the Ser that is part of the protease active site of the proenzyme becomes the pyruvoyl prosthetic group, which constitutes an essential element of the active site of the mature decarboxylase.

The protein resides in the cell membrane. It catalyses the reaction a 1,2-diacyl-sn-glycero-3-phospho-L-serine + H(+) = a 1,2-diacyl-sn-glycero-3-phosphoethanolamine + CO2. Its pathway is phospholipid metabolism; phosphatidylethanolamine biosynthesis; phosphatidylethanolamine from CDP-diacylglycerol: step 2/2. Functionally, catalyzes the formation of phosphatidylethanolamine (PtdEtn) from phosphatidylserine (PtdSer). The polypeptide is Phosphatidylserine decarboxylase proenzyme (Francisella tularensis subsp. novicida (strain U112)).